A 250-amino-acid chain; its full sequence is MANQKQTTHFGFKSVDWNEKEKKVAEVFHSVAKNYDRMNDLMSLGIHHLWKRYTIELSHVRPGQSVLDLAGGSGDLTRLLSQKVGNSGQVILADINAAMLHVGRDRLLDEGLFKNIRYVQGNAQCLPFADNSFHCITMGFGLRNVTDKDEALQSMYRVCKPGGKLMVLEFSTPVFPGLKPVYDWYSFNILPKIGKFVANDEASYQYLAESIRMHPDQETLKAMIERVGFEDCHYHNLSGGIVALHIAYKY.

S-adenosyl-L-methionine contacts are provided by residues Ser73, Asp94, and 122–123; that span reads NA.

This sequence belongs to the class I-like SAM-binding methyltransferase superfamily. MenG/UbiE family.

It carries out the reaction a 2-demethylmenaquinol + S-adenosyl-L-methionine = a menaquinol + S-adenosyl-L-homocysteine + H(+). The enzyme catalyses a 2-methoxy-6-(all-trans-polyprenyl)benzene-1,4-diol + S-adenosyl-L-methionine = a 5-methoxy-2-methyl-3-(all-trans-polyprenyl)benzene-1,4-diol + S-adenosyl-L-homocysteine + H(+). It participates in quinol/quinone metabolism; menaquinone biosynthesis; menaquinol from 1,4-dihydroxy-2-naphthoate: step 2/2. Its pathway is cofactor biosynthesis; ubiquinone biosynthesis. Methyltransferase required for the conversion of demethylmenaquinol (DMKH2) to menaquinol (MKH2) and the conversion of 2-polyprenyl-6-methoxy-1,4-benzoquinol (DDMQH2) to 2-polyprenyl-3-methyl-6-methoxy-1,4-benzoquinol (DMQH2). In Legionella pneumophila (strain Corby), this protein is Ubiquinone/menaquinone biosynthesis C-methyltransferase UbiE.